Consider the following 330-residue polypeptide: MATH domain and coiled-coil domain-containing protein At3g58210 (330 aa).

An MATH domain is found at 6–133; the sequence is DNKFTWVIQN…NDELKIVAEV (128 aa). Residues 263–314 adopt a coiled-coil conformation; sequence FKVDWLEKKLEEVKKKKEEEQTGEARIQELEEELKEFKQKCLDREAMLEKEK.

The chain is MATH domain and coiled-coil domain-containing protein At3g58210 from Arabidopsis thaliana (Mouse-ear cress).